A 175-amino-acid polypeptide reads, in one-letter code: Protein GrpE (175 aa).

Belongs to the GrpE family. As to quaternary structure, homodimer.

It is found in the cytoplasm. Functionally, participates actively in the response to hyperosmotic and heat shock by preventing the aggregation of stress-denatured proteins, in association with DnaK and GrpE. It is the nucleotide exchange factor for DnaK and may function as a thermosensor. Unfolded proteins bind initially to DnaJ; upon interaction with the DnaJ-bound protein, DnaK hydrolyzes its bound ATP, resulting in the formation of a stable complex. GrpE releases ADP from DnaK; ATP binding to DnaK triggers the release of the substrate protein, thus completing the reaction cycle. Several rounds of ATP-dependent interactions between DnaJ, DnaK and GrpE are required for fully efficient folding. This Thermoplasma acidophilum (strain ATCC 25905 / DSM 1728 / JCM 9062 / NBRC 15155 / AMRC-C165) protein is Protein GrpE.